A 172-amino-acid chain; its full sequence is Ribosome maturation factor RimM (172 aa).

In terms of domain architecture, PRC barrel spans 95-168; the sequence is DDGEFYYHEI…RVDVEILEGL (74 aa).

It belongs to the RimM family. In terms of assembly, binds ribosomal protein uS19.

It is found in the cytoplasm. An accessory protein needed during the final step in the assembly of 30S ribosomal subunit, possibly for assembly of the head region. Essential for efficient processing of 16S rRNA. May be needed both before and after RbfA during the maturation of 16S rRNA. It has affinity for free ribosomal 30S subunits but not for 70S ribosomes. The polypeptide is Ribosome maturation factor RimM (Streptococcus pneumoniae (strain P1031)).